Reading from the N-terminus, the 490-residue chain is Betaine aldehyde dehydrogenase (490 aa).

K(+)-binding residues include S26, I27, and D93. 150–152 (GAW) provides a ligand contact to NAD(+). Residue K162 is the Charge relay system of the active site. NAD(+) is bound by residues 176-179 (KPSE) and 230-233 (GVET). L246 provides a ligand contact to K(+). E252 serves as the catalytic Proton acceptor. NAD(+)-binding residues include G254, C286, and E387. C286 serves as the catalytic Nucleophile. Position 286 is a cysteine sulfenic acid (-SOH) (C286). K(+)-binding residues include K457 and G460. The active-site Charge relay system is E464.

This sequence belongs to the aldehyde dehydrogenase family. In terms of assembly, dimer of dimers. The cofactor is K(+).

The enzyme catalyses betaine aldehyde + NAD(+) + H2O = glycine betaine + NADH + 2 H(+). The protein operates within amine and polyamine biosynthesis; betaine biosynthesis via choline pathway; betaine from betaine aldehyde: step 1/1. Its function is as follows. Involved in the biosynthesis of the osmoprotectant glycine betaine. Catalyzes the irreversible oxidation of betaine aldehyde to the corresponding acid. This Acinetobacter baumannii (strain SDF) protein is Betaine aldehyde dehydrogenase.